A 201-amino-acid polypeptide reads, in one-letter code: Small ribosomal subunit protein uS4 (201 aa).

An S4 RNA-binding domain is found at 91 to 151 (SRLDNVVYRA…EKSQKMNWFE (61 aa)).

This sequence belongs to the universal ribosomal protein uS4 family. In terms of assembly, part of the 30S ribosomal subunit. Contacts protein S5. The interaction surface between S4 and S5 is involved in control of translational fidelity.

Functionally, one of the primary rRNA binding proteins, it binds directly to 16S rRNA where it nucleates assembly of the body of the 30S subunit. In terms of biological role, with S5 and S12 plays an important role in translational accuracy. The chain is Small ribosomal subunit protein uS4 from Corynebacterium glutamicum (strain R).